The following is a 347-amino-acid chain: Heat-inducible transcription repressor HrcA (347 aa).

The protein belongs to the HrcA family.

In terms of biological role, negative regulator of class I heat shock genes (grpE-dnaK-dnaJ and groELS operons). Prevents heat-shock induction of these operons. The sequence is that of Heat-inducible transcription repressor HrcA from Nocardia farcinica (strain IFM 10152).